We begin with the raw amino-acid sequence, 130 residues long: Fluoride-specific ion channel FluC (130 aa).

4 helical membrane-spanning segments follow: residues 3 to 23, 39 to 59, 67 to 87, and 102 to 122; these read FIFLWAALGGAIGSSLRYFVG, GTFSVNVIGCFVIGFMGHLAV, FGIFFVTGVLGGFTTFSSYGL, and VSYALGTNILGLIGVAIGWFL. 2 residues coordinate Na(+): G77 and T80.

The protein belongs to the fluoride channel Fluc/FEX (TC 1.A.43) family.

The protein localises to the cell inner membrane. The enzyme catalyses fluoride(in) = fluoride(out). Its activity is regulated as follows. Na(+) is not transported, but it plays an essential structural role and its presence is essential for fluoride channel function. In terms of biological role, fluoride-specific ion channel. Important for reducing fluoride concentration in the cell, thus reducing its toxicity. The protein is Fluoride-specific ion channel FluC of Helicobacter pylori (strain Shi470).